Consider the following 666-residue polypeptide: Endogenous retrovirus group K member 9 Gag polyprotein (666 aa).

The N-myristoyl glycine moiety is linked to residue glycine 2. The tract at residues 165 to 264 (GKGPELVGPS…APPSRQGSEL (100 aa)) is disordered. The span at 232–247 (GMPPAPQGRAPYPQPP) shows a compositional bias: pro residues. CCHC-type zinc fingers lie at residues 544-561 (GKCY…NCPV) and 580-597 (DLCP…QCRS). The segment at 598–641 (KFDKNGQPLSGNEQRGQPQAPQQTGAFPIQPFVPQGFQGQQPPL) is disordered. A compositionally biased stretch (polar residues) spans 604–622 (QPLSGNEQRGQPQAPQQTG). A compositionally biased stretch (low complexity) spans 624-640 (FPIQPFVPQGFQGQQPP).

Belongs to the beta type-B retroviral Gag protein family. HERV class-II K(HML-2) gag subfamily. Post-translationally, myristoylation is essential for retroviral assembly. Alteration of the glycine residue leads to a block in the budding of particles and an accumulation of Gag inside the cell. Specific enzymatic cleavages may yield mature proteins.

It localises to the cell membrane. The products of the Gag polyproteins of infectious retroviruses perform highly complex orchestrated tasks during the assembly, budding, maturation, and infection stages of the viral replication cycle. During viral assembly, the proteins form membrane associations and self-associations that ultimately result in budding of an immature virion from the infected cell. Gag precursors also function during viral assembly to selectively bind and package two plus strands of genomic RNA. Endogenous Gag proteins may have kept, lost or modified their original function during evolution. This Homo sapiens (Human) protein is Endogenous retrovirus group K member 9 Gag polyprotein (ERVK-9).